Reading from the N-terminus, the 310-residue chain is Probable GTP 3',8-cyclase (310 aa).

Residues 5-218 form the Radical SAM core domain; it reads KYGRSLQKLR…VNIIFELGGR (214 aa). Arg-14 serves as a coordination point for GTP. Residues Cys-21, Cys-25, and Cys-28 each coordinate [4Fe-4S] cluster. Lys-62 contributes to the GTP binding site. Gly-66 provides a ligand contact to S-adenosyl-L-methionine. Residue Thr-91 participates in GTP binding. Ser-115 is an S-adenosyl-L-methionine binding site. Lys-153 lines the GTP pocket. Positions 251, 254, and 268 each coordinate [4Fe-4S] cluster.

Belongs to the radical SAM superfamily. MoaA family. It depends on [4Fe-4S] cluster as a cofactor.

It carries out the reaction GTP + AH2 + S-adenosyl-L-methionine = (8S)-3',8-cyclo-7,8-dihydroguanosine 5'-triphosphate + 5'-deoxyadenosine + L-methionine + A + H(+). It functions in the pathway cofactor biosynthesis; molybdopterin biosynthesis. Catalyzes the cyclization of GTP to (8S)-3',8-cyclo-7,8-dihydroguanosine 5'-triphosphate. This is Probable GTP 3',8-cyclase from Pyrobaculum aerophilum (strain ATCC 51768 / DSM 7523 / JCM 9630 / CIP 104966 / NBRC 100827 / IM2).